Here is a 561-residue protein sequence, read N- to C-terminus: Acyl-CoA ligase frbB (561 aa).

ATP is bound by residues 213 to 221 (TSGTSGAQK), 354 to 359 (PGWGLT), aspartate 437, arginine 456, and lysine 551. Residues 284 to 354 (DLKRVLGSIA…TLRPKWHLQP (71 aa)) form an SBD1 region. An SBD2 region spans residues 355 to 417 (GWGLTEGGGA…MKSPSVIAGY (63 aa)).

This sequence belongs to the ATP-dependent AMP-binding enzyme family.

It functions in the pathway antifungal biosynthesis. In terms of biological role, acyl-CoA ligase; part of the gene cluster that mediates the biosynthesis of the antifungal antibiotic FR901469, an inhibitor of beta-1,3-glucansynthase, exerting antifungal activity against the pathogenes Candida albicans and Aspergillus fumigatus. FR901469 is a cyclic depsipeptide containing 12 amino acid residues and a fatty acid chain. The NRPS frbI contains 12 modules responsible for the formation of the depsipeptide backbone which is denoted as Acyl-Thr-Ala-Tyr-Val-4OHPro-Thr-Thr-3OHPro-threo3OHGln-Gly-Thr-Orn-OH (C71H116N14O23). The PKS frbB is probably involved in the production of the hydrocarbon chain, and the acyl-CoA ligase frbC might be involved in the transport of the chain to the peptide ptoduct of frbI. Because FR901469 contains 3 hydroxylated amino acid residues, the 3 oxygenases frbA, frbH, and frbJ might be participating in amino acid hydroxylation. As no thioesterase domains were detected in frbI or frbB, the thioesterases frbD and frbE may instead release and cyclize the products of the NRPS and PKS, respectively. This is Acyl-CoA ligase frbB from Dothideomycetidae sp. (strain 11243) (Fungal sp. (strain No.11243)).